A 554-amino-acid chain; its full sequence is Guanine nucleotide-binding protein alpha-2 subunit (554 aa).

2 disordered regions span residues 1–139 (MGLC…NNSN) and 157–183 (VNGN…THSG). Glycine 2 carries the N-myristoyl glycine lipid modification. Cysteine 4 carries S-palmitoyl cysteine lipidation. 2 stretches are compositionally biased toward basic and acidic residues: residues 7–17 (KDSRESTHDGG) and 28–43 (ANRR…DKKQ). The span at 52 to 66 (GSIVNAASNINNSSS) shows a compositional bias: low complexity. Positions 67–85 (GKTKISTVSEDGTVSNGVG) are enriched in polar residues. Residues 91–139 (DNANNKNNGNNNNSNNNDNNNNNNNNIGNNINGNNNNDSENIHDSNNSN) show a composition bias toward low complexity. In terms of domain architecture, G-alpha spans 228–554 (NALKVLLLGS…ENSLKDSGVL (327 aa)). A G1 motif region spans residues 231–244 (KVLLLGSGESGKST). GTP-binding residues include glutamate 239, serine 240, glycine 241, lysine 242, serine 243, threonine 244, aspartate 351, isoleucine 376, threonine 382, glycine 405, asparagine 471, lysine 472, aspartate 474, and alanine 526. Serine 243 lines the Mg(2+) pocket. A G2 motif region spans residues 374–382 (DVIRTRKKT). Residue threonine 382 participates in Mg(2+) binding. The tract at residues 398-407 (LHFFDVGGQR) is G3 motif. Positions 467-474 (VLFLNKID) are G4 motif. The tract at residues 524–529 (TQATDT) is G5 motif.

The protein belongs to the G-alpha family. In terms of assembly, g proteins are composed of 3 units; alpha, beta and gamma. The alpha chain contains the guanine nucleotide binding site. Mg(2+) serves as cofactor.

Functionally, guanine nucleotide-binding proteins (G proteins) are involved as modulators or transducers in various transmembrane signaling systems. This protein may be involved in the determination of the cAMP level according to nutritional conditions, most probably as a regulator of adenylyl cyclase. The polypeptide is Guanine nucleotide-binding protein alpha-2 subunit (GPA2) (Kluyveromyces lactis (strain ATCC 8585 / CBS 2359 / DSM 70799 / NBRC 1267 / NRRL Y-1140 / WM37) (Yeast)).